A 235-amino-acid polypeptide reads, in one-letter code: Flagellar L-ring protein (235 aa).

The first 18 residues, 1 to 18, serve as a signal peptide directing secretion; that stretch reads MNKIAGTLFLLAGLAMAG. Cys-19 carries the N-palmitoyl cysteine lipid modification. Cys-19 carries S-diacylglycerol cysteine lipidation.

This sequence belongs to the FlgH family. As to quaternary structure, the basal body constitutes a major portion of the flagellar organelle and consists of four rings (L,P,S, and M) mounted on a central rod.

The protein localises to the cell outer membrane. The protein resides in the bacterial flagellum basal body. In terms of biological role, assembles around the rod to form the L-ring and probably protects the motor/basal body from shearing forces during rotation. The chain is Flagellar L-ring protein from Chelativorans sp. (strain BNC1).